Here is a 351-residue protein sequence, read N- to C-terminus: D-alanine--D-alanine ligase (351 aa).

One can recognise an ATP-grasp domain in the interval 135 to 343 (NQIFLQSGQK…MEEVFADLIE (209 aa)). 167–222 (LMSLGFPQFLKPVEGGSSVSTYKITNQEQLSRQLALIFESDSKVMSQSFLAGTEVS) is an ATP binding site. Mg(2+) contacts are provided by D298, E310, and N312.

The protein belongs to the D-alanine--D-alanine ligase family. Mg(2+) serves as cofactor. Mn(2+) is required as a cofactor.

The protein localises to the cytoplasm. The catalysed reaction is 2 D-alanine + ATP = D-alanyl-D-alanine + ADP + phosphate + H(+). It participates in cell wall biogenesis; peptidoglycan biosynthesis. Functionally, cell wall formation. The sequence is that of D-alanine--D-alanine ligase from Leptospira borgpetersenii serovar Hardjo-bovis (strain JB197).